Consider the following 209-residue polypeptide: Large ribosomal subunit protein uL3 (209 aa).

The segment at 127–152 (SGGPSSHGSKFHRHLGSTGQAATPSR) is disordered. Residues 143–152 (STGQAATPSR) are compositionally biased toward polar residues.

The protein belongs to the universal ribosomal protein uL3 family. In terms of assembly, part of the 50S ribosomal subunit. Forms a cluster with proteins L14 and L19.

In terms of biological role, one of the primary rRNA binding proteins, it binds directly near the 3'-end of the 23S rRNA, where it nucleates assembly of the 50S subunit. This Borrelia hermsii (strain HS1 / DAH) protein is Large ribosomal subunit protein uL3.